A 227-amino-acid chain; its full sequence is MAEEHETRPPSAGRPPSSGRGRADDADEREEGEIADDDSGHAPPQANPAAPHPLEHAWTFWFDNPQGKSKQATWGSSIRPIHTFSTVEDFWSLYNNIHHPSKLVVGADFHCFKNKIEPKWEDPICANGGKWTFSCGRGKSDTMWLHTLLAMIGEQFDYGDEICGAVVSVRGKQERIAIWTKNAANEAAQISIGKQWKEFLDYKDSIGFIVHDDAKKMDKGLKNRYTV.

Residues 1–52 (MAEEHETRPPSAGRPPSSGRGRADDADEREEGEIADDDSGHAPPQANPAAPH) form a disordered region. Low complexity predominate over residues 9–20 (PPSAGRPPSSGR). Residues 25-37 (DADEREEGEIADD) are compositionally biased toward acidic residues. 2 EIF4G-binding regions span residues 52 to 55 (HPLE) and 62 to 98 (FDNP…NNIH). MRNA contacts are provided by residues 70–75 (KQATWG), lysine 102, and 120–121 (WE). A disulfide bond links cysteine 125 and cysteine 163. Residues 146-155 (HTLLAMIGEQ) are EIF4G-binding. MRNA-binding positions include 170–175 (RGKQER) and 215–219 (KKMDK).

It belongs to the eukaryotic initiation factor 4E family. EIF4F is a multi-subunit complex, the composition of which varies with external and internal environmental conditions. It is composed of at least EIF4A, EIF4E and EIF4G. EIF4E is also known to interact with other partners. In higher plants two isoforms of EIF4F have been identified, named isoform EIF4F and isoform EIF(iso)4F. Isoform EIF4F has subunits p220 and p26, whereas isoform EIF(iso)4F has subunits p82 and p28. In terms of processing, according to the redox status, the Cys-125-Cys-163 disulfide bridge may have a role in regulating protein function by affecting its ability to bind capped mRNA.

It localises to the nucleus. It is found in the cytoplasm. In terms of biological role, component of the protein complex eIF4F, which is involved in the recognition of the mRNA cap, ATP-dependent unwinding of 5'-terminal secondary structure and recruitment of mRNA to the ribosome. Recognizes and binds the 7-methylguanosine-containing mRNA cap during an early step in the initiation of protein synthesis and facilitates ribosome binding by inducing the unwinding of the mRNAs secondary structures. The protein is Eukaryotic translation initiation factor 4E-1 of Oryza sativa subsp. japonica (Rice).